The following is a 151-amino-acid chain: 3-dehydroquinate dehydratase 1 (151 aa).

Tyr-24 (proton acceptor) is an active-site residue. 3 residues coordinate substrate: Asn-75, His-81, and Asp-88. His-101 acts as the Proton donor in catalysis. Residues 102-103 and Arg-112 contribute to the substrate site; that span reads IS.

Belongs to the type-II 3-dehydroquinase family. As to quaternary structure, homododecamer.

The catalysed reaction is 3-dehydroquinate = 3-dehydroshikimate + H2O. Its pathway is metabolic intermediate biosynthesis; chorismate biosynthesis; chorismate from D-erythrose 4-phosphate and phosphoenolpyruvate: step 3/7. Catalyzes a trans-dehydration via an enolate intermediate. This chain is 3-dehydroquinate dehydratase 1 (aroQ1), found in Corynebacterium efficiens (strain DSM 44549 / YS-314 / AJ 12310 / JCM 11189 / NBRC 100395).